We begin with the raw amino-acid sequence, 188 residues long: Ubiquitin-conjugating enzyme E2-21 kDa (188 aa).

In terms of domain architecture, UBC core spans Ser3–Ala182. Catalysis depends on Cys119, which acts as the Glycyl thioester intermediate.

Belongs to the ubiquitin-conjugating enzyme family.

The enzyme catalyses S-ubiquitinyl-[E1 ubiquitin-activating enzyme]-L-cysteine + [E2 ubiquitin-conjugating enzyme]-L-cysteine = [E1 ubiquitin-activating enzyme]-L-cysteine + S-ubiquitinyl-[E2 ubiquitin-conjugating enzyme]-L-cysteine.. The protein operates within protein modification; protein ubiquitination. Catalyzes the covalent attachment of ubiquitin to other proteins. Essential for peroxisome biogenesis. Required for UBC4-independent ubiquitination of PEX5. The protein is Ubiquitin-conjugating enzyme E2-21 kDa (PEX4) of Pichia angusta (Yeast).